The chain runs to 80 residues: Conotoxin Bu3 (80 aa).

A signal peptide spans 1-22 (MKLMCVLIVSVLVLTACQLSTA). The propeptide occupies 23–51 (DDTRDKQKDRLVRLFRKKRDSSDSGLLPR). Cystine bridges form between Cys-53/Cys-69, Cys-60/Cys-72, and Cys-68/Cys-79.

It belongs to the conotoxin O1 superfamily. Expressed by the venom duct.

It is found in the secreted. The protein is Conotoxin Bu3 of Conus bullatus (Bubble cone).